Here is a 517-residue protein sequence, read N- to C-terminus: FERM domain-containing protein 5 (517 aa).

The region spanning 17-298 (YSCTVRLLDD…ENQAFYKLEK (282 aa)) is the FERM domain. The interval 308-353 (SNLFFKGSRFRYSGRVAKEVMESSAKIKREPPEIHRAGMVPSRSCP) is interaction with ROCK1. The disordered stretch occupies residues 344–367 (AGMVPSRSCPSITHGPRLSSVPRT). Position 375 is a phosphoserine (S375). 2 disordered regions span residues 385 to 408 (DSAH…VRSS) and 485 to 517 (GHGG…VPLD). The span at 388 to 398 (HSTPVRSSSHG) shows a compositional bias: polar residues. The segment covering 498–517 (KGPQLQQQQWKGWGKSVPLD) has biased composition (low complexity).

Interacts with CTNND1, ITGB5 (via cytoplasmic domain) and ROCK1.

The protein localises to the cell junction. It is found in the adherens junction. Functionally, may be involved in regulation of cell migration. May regulate cell-matrix interactions via its interaction with ITGB5 and modifying ITGB5 cytoplasmic tail interactions such as with FERMT2 and TLN1. May regulate ROCK1 kinase activity possibly involved in regulation of actin stress fiber formation. This chain is FERM domain-containing protein 5 (Frmd5), found in Mus musculus (Mouse).